Consider the following 953-residue polypeptide: Translation initiation factor IF-2 (953 aa).

Disordered regions lie at residues 48–212 (SSFS…KIDF) and 279–367 (TKLK…FHEL). Basic and acidic residues-rich tracts occupy residues 80-89 (TGSEHVEKTQ), 98-111 (FKAE…EQAA), and 140-188 (QGDK…ENHK). 2 stretches are compositionally biased toward polar residues: residues 191 to 207 (RFTN…QSKS) and 282 to 291 (KSSNISAKST). A compositionally biased stretch (basic and acidic residues) spans 300-317 (ARPEKNRELTHHSQEGQK). Low complexity predominate over residues 322–338 (SWNSQNQVRNQKNSNWN). Over residues 339 to 348 (KNKKTKKGKN) the composition is skewed to basic residues. The tr-type G domain maps to 454–623 (ERAPVVTIMG…LLVAEVEELK (170 aa)). The tract at residues 463–470 (GHVDHGKT) is G1. 463 to 470 (GHVDHGKT) lines the GTP pocket. The interval 488–492 (GITQH) is G2. Residues 509–512 (DTPG) are G3. GTP is bound by residues 509–513 (DTPGH) and 563–566 (NKID). Positions 563–566 (NKID) are G4. The tract at residues 599–601 (SAK) is G5.

The protein belongs to the TRAFAC class translation factor GTPase superfamily. Classic translation factor GTPase family. IF-2 subfamily.

The protein localises to the cytoplasm. Its function is as follows. One of the essential components for the initiation of protein synthesis. Protects formylmethionyl-tRNA from spontaneous hydrolysis and promotes its binding to the 30S ribosomal subunits. Also involved in the hydrolysis of GTP during the formation of the 70S ribosomal complex. This Streptococcus pyogenes serotype M3 (strain ATCC BAA-595 / MGAS315) protein is Translation initiation factor IF-2.